A 328-amino-acid polypeptide reads, in one-letter code: Nucleotide-binding protein Blon_1085/BLIJ_1109 (328 aa).

The interval 1 to 33 (MSQQTTIRDTGEAAATNAPANSATSTSTPDNQP) is disordered. The segment covering 13-29 (AAATNAPANSATSTSTP) has biased composition (low complexity). Residue 46 to 53 (GMSGAGRS) coordinates ATP. 101-104 (DVRS) serves as a coordination point for GTP.

This sequence belongs to the RapZ-like family.

Displays ATPase and GTPase activities. The protein is Nucleotide-binding protein Blon_1085/BLIJ_1109 of Bifidobacterium longum subsp. infantis (strain ATCC 15697 / DSM 20088 / JCM 1222 / NCTC 11817 / S12).